The primary structure comprises 399 residues: Acetate kinase (399 aa).

Asn-10 is a Mg(2+) binding site. Lys-17 provides a ligand contact to ATP. Arg-91 is a substrate binding site. The active-site Proton donor/acceptor is Asp-150. Residues His-210–Gly-214, Asp-285–Arg-287, and Gly-333–Asn-337 each bind ATP. Glu-387 serves as a coordination point for Mg(2+).

Belongs to the acetokinase family. As to quaternary structure, homodimer. Requires Mg(2+) as cofactor. It depends on Mn(2+) as a cofactor.

Its subcellular location is the cytoplasm. The enzyme catalyses acetate + ATP = acetyl phosphate + ADP. Its pathway is metabolic intermediate biosynthesis; acetyl-CoA biosynthesis; acetyl-CoA from acetate: step 1/2. Its function is as follows. Catalyzes the formation of acetyl phosphate from acetate and ATP. Can also catalyze the reverse reaction. This is Acetate kinase from Wigglesworthia glossinidia brevipalpis.